Consider the following 103-residue polypeptide: Astacin-like peptidase p16 (103 aa).

The Peptidase M12A domain maps to 1-103 (NAIPGQHYRW…DAFSRDGSPM (103 aa)).

The cofactor is Zn(2+).

Functionally, active against casein. Has a role as a digestive enzyme. The sequence is that of Astacin-like peptidase p16 from Argiope aurantia (Black-and-yellow garden spider).